A 56-amino-acid polypeptide reads, in one-letter code: Per os infectivity factor AC110 (56 aa).

Its function is as follows. Plays an essential role in the process of oral infection. May participate in the crossing of occlusion-derived virions through the host peritrophic membrane during oral infection. This is Per os infectivity factor AC110 from Autographa californica nuclear polyhedrosis virus (AcMNPV).